A 2919-amino-acid polypeptide reads, in one-letter code: MRSRAASAPLPTPLLPLLLLLLLLPPSPLLGDQVGPCRSLGSGGRSSSGACAPVGWLCPASASNLWLYTSRCRESGIELTGHLVPHHDGLRVWCPESGAHIPLPPSSEGCPWSCRLLGIGGHLSPQGTLTLPEEHPCLKAPRLRCQSCKLAQAPGLRAGEGSPEESLGGRRKRNVNTAPQFQPPSYQATVPENQPAGTSVASLRAIDPDEGEAGRLEYTMDALFDSRSNHFFSLDPITGVVTTAEELDRETKSTHVFRVTAQDHGMPRRSALATLTILVTDTNDHDPVFEQQEYKESLRENLEVGYEVLTVRATDGDAPPNANILYRLLEGAGGSPSDAFEIDPRSGVIRTRGPVDREEVESYKLTVEASDQGRDPGPRSSTAIVFLSVEDDNDNAPQFSEKRYVVQVREDVTPGAPVLRVTASDRDKGSNALVHYSIMSGNARGQFYLDAQTGALDVVSPLDYETTKEYTLRIRAQDGGRPPLSNVSGLVTVQVLDINDNAPIFVSTPFQATVLESVPLGYLVLHVQAIDADAGDNARLEYSLAGVGHDFPFTINNGTGWISVAAELDREEVDFYSFGVEARDHGTPALTASASVSVTILDVNDNNPTFTQPEYTVRLNEDAAVGTSVVTVSAVDRDAHSVITYQITSGNTRNRFSITSQSGGGLVSLALPLDYKLERQYVLAVTASDGTRQDTAQIVVNVTDANTHRPVFQSSHYTVNVNEDRPAGTTVVLISATDEDTGENARITYFMEDSIPQFRIDADTGAVTTQAELDYEDQVSYTLAITARDNGIPQKSDTTYLEILVNDVNDNAPQFLRDSYQGSVYEDVPPFTSVLQISATDRDSGLNGRVFYTFQGGDDGDGDFIVESTSGIVRTLRRLDRENVAQYVLRAYAVDKGMPPARTPMEVTVTVLDVNDNPPVFEQDEFDVFVEENSPIGLAVARVTATDPDEGTNAQIMYQIVEGNIPEVFQLDIFSGELTALVDLDYEDRPEYVLVIQATSAPLVSRATVHVRLLDRNDNPPVLGNFEILFNNYVTNRSSSFPGGAIGRVPAHDPDISDSLTYSFERGNELSLVLLNASTGELRLSRALDNNRPLEAIMSVLVSDGVHSVTAQCSLRVTIITDEMLTHSITLRLEDMSPERFLSPLLGLFIQAVAATLATPPDHVVVFNVQRDTDAPGGHILNVSLSVGQPPGPGGGPPFLPSEDLQERLYLNRSLLTAISAQRVLPFDDNICLREPCENYMRCVSVLRFDSSAPFIASSSVLFRPIHPVGGLRCRCPPGFTGDYCETEVDLCYSRPCGPHGRCRSREGGYTCLCLDGYTGEHCEASTHSGRCTPGVCKNGGTCVNLLVGGFKCDCPSGDFEKPFCQVTTRSFPARSFITFRGLRQRFHFTLALSFATKERNGLLLYNGRFNEKHDFVALEVIQEQVQLTFSAGESTTTVSPFVPGGVSDGQWHTVQLKYYNKPLLGQTGLPQGPSEQKVAVVSVDGCDTGVALRFGAMLGNYSCAAQGTQGGSKKSLDLTGPLLLGGVPDLPESFPVRMRHFVGCMKDLQVDSRHIDMADFIANNGTVPGCPTKKIVCDSSICHNGGTCVNQWNAFSCECPLGFGGKSCAQEMANPQRFLGSSLVAWHGLSLPISQPWHLSLMFRTRQADGVLLQAVTRGRSTITLQLRAGHVVLSVEGTGLQASSLRLEPGRANDGDWHHAQLALGASGGPGHAILSFDYGQQKAEGNLGPRLHGLHLSNITVGGVPGPASGVARGFRGCLQGVRVSETPEGISSLDPSRGESINVEPGCSWPDPCDSNPCPTNSYCSNDWDSYSCSCVLGYYGDNCTNVCDLNPCEHQSVCTRKPNTPHGYICECLPNYLGPYCETRIDQPCPRGWWGHPTCGPCNCDVSKGFDPDCNKTSGECHCKENHYRPPGSPTCLLCDCYPTGSLSRVCDPEDGQCPCKPGVIGRQCDRCDNPFAEVTTNGCEVNYDSCPRAIEAGIWWPRTRFGLPAAAPCPKGSFGTAVRHCDEHRGWLPPNLFNCTSVTFSELKGFAERLQRNESGLDSGRSQRLALLLRNATQHTSGYFGSDVKVAYQLATRLLAHESAQRGFGLSATQDVHFTENLLRVGSALLDAANKRHWELIQQTEGGTAWLLQHYEAYASALAQNMRHTYLSPFTIVTPNIVISVVRLDKGNFAGTKLPRYEALRGERPPDLETTVILPESVFREMPSMVRSAGPGEAQETEELARRQRRHPELSQGEAVASVIIYHTLAGLLPHNYDPDKRSLRVPKRPVINTPVVSISVHDDEELLPRALDKPVTVQFRLLETEERTKPICVFWNHSILVSGTGGWSARGCEVVFRNESHVSCQCNHMTSFAVLMDMSRRENGEILPLKTLTYVALGVTLAALMLTFLFLTLLRALRSNQHGIRRNLTAALGLAQLVFLLGINQADLPFACTVIAILLHFLYLCTFSWALLEALHLYRALTEVRDVNASPMRFYYMLGWGVPAFITGLAVGLDPEGYGNPDFCWLSVYDTLIWSFAGPVAFAVSMSVFLYILSARASCAAQRQGFEKKGPVSGLRSSFTVLLLLSATWLLALLSVNSDTLLFHYLFAACNCVQGPFIFLSYVVLSKEVRKALKFACSRKPSPDPALTTKSTLTSSYNCPSPYADGRLYQPYGDSAGSLHSASRSGKSQPSYIPFLLREESTLNPGQVPPGLGDPSGLFLEGQAQQHDPDTDSDSDLSLEDDQSGSYASTHSSDSEEEEEEAAFPGEQGWDSLLGPGAERLPLHSTPKDGGPGSGKVPWLGDFGTTTKENSGSGPLEERPRENGDALTREGSLGPLPGPSTQPHKGILKKKCLPTISEKSSLLRLPLEQGTGSSRGSSISEGSRHGPPPRPPPRQSLQEQLNGVMPVAMSIKAGTVDEDSSGSEFLFFNFLH.

Residues 1–31 (MRSRAASAPLPTPLLPLLLLLLLLPPSPLLG) form the signal peptide. Over 32-2380 (DQVGPCRSLG…GEILPLKTLT (2349 aa)) the chain is Extracellular. The disordered stretch occupies residues 156-194 (LRAGEGSPEESLGGRRKRNVNTAPQFQPPSYQATVPENQ). Residues 175–194 (VNTAPQFQPPSYQATVPENQ) are compositionally biased toward polar residues. 9 Cadherin domains span residues 182 to 289 (QPPS…DPVF), 290 to 399 (EQQE…APQF), 400 to 505 (SEKR…APIF), 506 to 610 (VSTP…NPTF), 611 to 712 (TQPE…RPVF), 713 to 815 (QSSH…APQF), 816 to 921 (LRDS…PPVF), 922 to 1023 (EQDE…PPVL), and 1028 to 1146 (ILFN…SPLL). N-linked (GlcNAc...) asparagine glycosylation is found at Asn486, Asn557, and Asn701. N-linked (GlcNAc...) asparagine glycosylation is found at Asn1036, Asn1076, Asn1182, and Asn1212. Residues 1228-1286 (DDNICLREPCENYMRCVSVLRFDSSAPFIASSSVLFRPIHPVGGLRCRCPPGFTGDYCE) enclose the EGF-like 1; atypical domain. One can recognise an EGF-like 2; calcium-binding domain in the interval 1288 to 1318 (EVDLCYSRPCGPHGRCRSREGGYTCLCLDGY). Cystine bridges form between Cys1292-Cys1303, Cys1297-Cys1312, Cys1314-Cys1323, Cys1332-Cys1343, Cys1337-Cys1353, and Cys1355-Cys1365. The EGF-like 3; calcium-binding domain occupies 1328 to 1366 (HSGRCTPGVCKNGGTCVNLLVGGFKCDCPSGDFEKPFCQ). The region spanning 1367–1571 (VTTRSFPARS…IANNGTVPGC (205 aa)) is the Laminin G-like 1 domain. Residues Asn1501 and Asn1565 are each glycosylated (N-linked (GlcNAc...) asparagine). 4 disulfide bridges follow: Cys1545–Cys1571, Cys1578–Cys1589, Cys1583–Cys1598, and Cys1600–Cys1609. In terms of domain architecture, EGF-like 4; calcium-binding spans 1574–1610 (KKIVCDSSICHNGGTCVNQWNAFSCECPLGFGGKSCA). Asn1591 is subject to (3R)-3-hydroxyasparagine. The Laminin G-like 2 domain maps to 1614–1791 (ANPQRFLGSS…GESINVEPGC (178 aa)). Asn1741 carries an N-linked (GlcNAc...) asparagine glycan. One can recognise an EGF-like 5; calcium-binding domain in the interval 1787-1829 (VEPGCSWPDPCDSNPCPTNSYCSNDWDSYSCSCVLGYYGDNCT). 13 cysteine pairs are disulfide-bonded: Cys1791–Cys1802, Cys1797–Cys1817, Cys1819–Cys1828, Cys1832–Cys1843, Cys1837–Cys1855, Cys1857–Cys1866, Cys1887–Cys1899, Cys1889–Cys1906, Cys1908–Cys1921, Cys1924–Cys1936, Cys1926–Cys1943, Cys1945–Cys1954, and Cys1957–Cys1969. Residue Asn1827 is glycosylated (N-linked (GlcNAc...) asparagine). The region spanning 1830–1867 (NVCDLNPCEHQSVCTRKPNTPHGYICECLPNYLGPYCE) is the EGF-like 6; calcium-binding domain. Positions 1883 to 1922 (TCGPCNCDVSKGFDPDCNKTSGECHCKENHYRPPGSPTCL) constitute an EGF-like 7; calcium-binding domain. The N-linked (GlcNAc...) asparagine glycan is linked to Asn1900. A Laminin EGF-like domain is found at 1924–1971 (CDCYPTGSLSRVCDPEDGQCPCKPGVIGRQCDRCDNPFAEVTTNGCEV). N-linked (GlcNAc...) asparagine glycans are attached at residues Asn2024, Asn2043, and Asn2061. Residues 2199 to 2369 (ETTVILPESV…AVLMDMSRRE (171 aa)) enclose the GAIN-B domain. The disordered stretch occupies residues 2216–2241 (VRSAGPGEAQETEELARRQRRHPELS). Disulfide bonds link Cys2319–Cys2351 and Cys2339–Cys2353. The segment at 2319-2369 (CVFWNHSILVSGTGGWSARGCEVVFRNESHVSCQCNHMTSFAVLMDMSRRE) is GPS. Asn2323 and Asn2345 each carry an N-linked (GlcNAc...) asparagine glycan. Residues 2381 to 2401 (YVALGVTLAALMLTFLFLTLL) form a helical membrane-spanning segment. At 2402–2413 (RALRSNQHGIRR) the chain is on the cytoplasmic side. The helical transmembrane segment at 2414–2433 (NLTAALGLAQLVFLLGINQA) threads the bilayer. The Extracellular segment spans residues 2434–2438 (DLPFA). The chain crosses the membrane as a helical span at residues 2439-2459 (CTVIAILLHFLYLCTFSWALL). Topologically, residues 2460–2480 (EALHLYRALTEVRDVNASPMR) are cytoplasmic. Residues 2481-2501 (FYYMLGWGVPAFITGLAVGLD) traverse the membrane as a helical segment. Topologically, residues 2502 to 2518 (PEGYGNPDFCWLSVYDT) are extracellular. A helical transmembrane segment spans residues 2519–2539 (LIWSFAGPVAFAVSMSVFLYI). Residues 2540–2563 (LSARASCAAQRQGFEKKGPVSGLR) lie on the Cytoplasmic side of the membrane. Residues 2564–2584 (SSFTVLLLLSATWLLALLSVN) traverse the membrane as a helical segment. The Extracellular portion of the chain corresponds to 2585–2591 (SDTLLFH). A helical transmembrane segment spans residues 2592–2612 (YLFAACNCVQGPFIFLSYVVL). At 2613–2919 (SKEVRKALKF…SEFLFFNFLH (307 aa)) the chain is on the cytoplasmic side. Positions 2690–2884 (LNPGQVPPGL…PPRPPPRQSL (195 aa)) are disordered. Over residues 2718–2730 (TDSDSDLSLEDDQ) the composition is skewed to acidic residues. Residues 2791–2800 (GTTTKENSGS) are compositionally biased toward polar residues. The segment covering 2803–2815 (LEERPRENGDALT) has biased composition (basic and acidic residues). Low complexity predominate over residues 2857–2868 (GTGSSRGSSISE).

Belongs to the G-protein coupled receptor 2 family. LN-TM7 subfamily. As to quaternary structure, heterodimer of 2 chains generated by proteolytic processing; the large extracellular N-terminal fragment and the membrane-bound C-terminal fragment predominantly remain associated and non-covalently linked. In terms of processing, the iron and 2-oxoglutarate dependent 3-hydroxylation of aspartate and asparagine is (R) stereospecific within EGF domains. Autoproteolytically processed at the GPS region of the GAIN-B domain; this cleavage modulates receptor activity. Expressed in the CNS and in the eye.

The protein resides in the cell membrane. Functionally, receptor that may have an important role in cell/cell signaling during nervous system formation. The protein is Cadherin EGF LAG seven-pass G-type receptor 2 of Mus musculus (Mouse).